A 586-amino-acid chain; its full sequence is DNA-binding protein RFX8 (586 aa).

Positions 22-97 form a DNA-binding region, RFX-type winged-helix; the sequence is VIQWLVDNFC…YHYDGICIKK (76 aa).

The protein belongs to the RFX family.

The protein resides in the nucleus. Its function is as follows. May be a transcription factor. This chain is DNA-binding protein RFX8 (RFX8), found in Homo sapiens (Human).